Reading from the N-terminus, the 630-residue chain is Probable potassium transport system protein Kup 1 (630 aa).

The next 12 membrane-spanning stretches (helical) occupy residues 15 to 35, 59 to 79, 109 to 129, 145 to 165, 173 to 193, 223 to 243, 255 to 275, 297 to 317, 345 to 365, 374 to 394, 405 to 425, and 427 to 447; these read FAALALAALGVVYGDIGTSPL, LSLIFWALVIVVSVKYVTFIM, WIMIVGVLGAAMFYGDGMVTP, PALKPFVIPLTMVVLFILFFV, VGAFFGPVMLVWFSALALLGV, LVAMGNVVLAVTGAEALYADM, WFAFVLPALVLNYFGQGALIL, LVGLATLATVIASQAVISGAF, IYLPAVNWGLMVAVMILVLGF, AYGIAVTGDMVITSILATVVV, AGLLFACFLSVELVFLAANIL, and IPDGGWFPLVAGMGVFVLMTT.

Belongs to the HAK/KUP transporter (TC 2.A.72) family.

The protein localises to the cell inner membrane. The enzyme catalyses K(+)(in) + H(+)(in) = K(+)(out) + H(+)(out). In terms of biological role, transport of potassium into the cell. Likely operates as a K(+):H(+) symporter. The protein is Probable potassium transport system protein Kup 1 of Dechloromonas aromatica (strain RCB).